A 363-amino-acid polypeptide reads, in one-letter code: MEKNHNPNTWSELPLDLLNLVFKRLSLVNFQRAKSVCSTRYSVSRQCVPERQIALLILFPKEDNTDNSTCKLFNPDEKDKLYKMQDLGVEFAKSVCRATYGSWLLMQDSKYHLYILNIFTRKRINLPPVESQLGMVKIERTIYDWFHFSHGHYSFSLSSPVFWIDEESKDYIVMWGLGVYCVVYAKKGDTSWNQIPQTSYFYDMVYKDHKLYFLSSTGTFQILDFSEEMDNKTSKVVCLLDRKLVVTVTGKALKVAKMWRPTYRTWSFRVFKISSSGYEKLDSLGDEALLLDLGITVLASDVEGFKRNSIYFSCRPSGGYETNASDLFLFNLETQKMELLHKFDCSSLQLYRSRWFLPSLTHT.

The F-box domain occupies 7 to 56; sequence PNTWSELPLDLLNLVFKRLSLVNFQRAKSVCSTRYSVSRQCVPERQIALL.

This Arabidopsis thaliana (Mouse-ear cress) protein is Probable F-box protein At4g22165.